The chain runs to 1783 residues: uncharacterized protein (1783 aa).

A helical transmembrane segment spans residues 16-36 (FFLLFGIIFVLFSIIFLETSI). Residues 105-119 (GSDSGQSNGSGDNQN) are compositionally biased toward low complexity. A disordered region spans residues 105–125 (GSDSGQSNGSGDNQNKTIPRK). 8 helical membrane passes run 917-937 (VSTVIAIFLIILALYLIILLI), 967-987 (VFAGIVAIVSSFLGVLFAFLL), 1010-1030 (WLSFFGSFFITFFVFEFISWI), 1084-1104 (LFTYVGLSSVALLLIGIAGTI), 1660-1680 (FLLGTIIPFIFITCVVLGISM), 1709-1729 (FIPAFVLALLISIGVLAGVLI), 1730-1750 (GIQAVVFNVAQVFLTNVFEFL), and 1752-1772 (YMVGIVLFGVTIFVIGSYFWI).

The protein belongs to the ABC-4 integral membrane protein family.

The protein resides in the cell membrane. This is an uncharacterized protein from Mycoplasma genitalium (strain ATCC 33530 / DSM 19775 / NCTC 10195 / G37) (Mycoplasmoides genitalium).